A 440-amino-acid polypeptide reads, in one-letter code: Xaa-Pro dipeptidase (440 aa).

Residues Asp246, Asp257, His337, Glu382, and Glu421 each coordinate Mn(2+).

Belongs to the peptidase M24B family. Bacterial-type prolidase subfamily. It depends on Mn(2+) as a cofactor.

The enzyme catalyses Xaa-L-Pro dipeptide + H2O = an L-alpha-amino acid + L-proline. Its function is as follows. Splits dipeptides with a prolyl residue in the C-terminal position. The polypeptide is Xaa-Pro dipeptidase (Aeromonas hydrophila subsp. hydrophila (strain ATCC 7966 / DSM 30187 / BCRC 13018 / CCUG 14551 / JCM 1027 / KCTC 2358 / NCIMB 9240 / NCTC 8049)).